Here is a 293-residue protein sequence, read N- to C-terminus: Homoserine kinase (293 aa).

84–94 (PLSRGLGSSSA) serves as a coordination point for ATP.

It belongs to the GHMP kinase family. Homoserine kinase subfamily.

It is found in the cytoplasm. The enzyme catalyses L-homoserine + ATP = O-phospho-L-homoserine + ADP + H(+). It participates in amino-acid biosynthesis; L-threonine biosynthesis; L-threonine from L-aspartate: step 4/5. Its function is as follows. Catalyzes the ATP-dependent phosphorylation of L-homoserine to L-homoserine phosphate. In Nitratiruptor sp. (strain SB155-2), this protein is Homoserine kinase.